The chain runs to 457 residues: F-box/LRR-repeat protein At2g42730 (457 aa).

An F-box domain is found at 4-50 (KDVISRLPDEVLGRILSLISTKEAVSTSVLSKRWKNMFVLVSNLDID). 3 LRR repeats span residues 265–288 (MDET…MRNL), 292–315 (IRNV…CKEM), and 318–343 (FDSL…LIKN).

In Arabidopsis thaliana (Mouse-ear cress), this protein is F-box/LRR-repeat protein At2g42730.